Here is a 790-residue protein sequence, read N- to C-terminus: Solute carrier family 26 member 9 (790 aa).

Topologically, residues 1–70 (MNQPRPRYVV…WLPKYKIKDY (70 aa)) are cytoplasmic. A helical transmembrane segment spans residues 71–96 (IIPDLLGGLSGGCIQVPQGMAFALLA). Topologically, residues 97–100 (NLPA) are extracellular. The helical transmembrane segment at 101-109 (VNGLYSSFF) threads the bilayer. Residues 110 to 129 (PLLTYFFLGGIHQMVPGTFA) lie on the Cytoplasmic side of the membrane. A helical transmembrane segment spans residues 130 to 142 (VISILVGNICLQL). Residues 143–162 (APESKFQIFNNVTNETYVDT) are Extracellular-facing. Residues 163-191 (AAMEAERLHVSATLACLTAVIQMALGFMQ) form a helical membrane-spanning segment. Residues 192–201 (FGFVAIYLSE) lie on the Cytoplasmic side of the membrane. The chain crosses the membrane as a helical span at residues 202–224 (SFIRGFMTAAGLQILISVLKYIF). Residues 225–237 (GLTIPSYTGPGSI) are Extracellular-facing. The segment at residues 238-246 (VFTFIDICK) is an intramembrane region (helical). Topologically, residues 247–254 (NLPHTNIA) are extracellular. The helical transmembrane segment at 255–275 (SLIFALVSGVFLVLVKELNAR) threads the bilayer. The Cytoplasmic segment spans residues 276 to 286 (YMHKIHFPIPT). The helical transmembrane segment at 287–299 (EMIVVVVATAISG) threads the bilayer. The Extracellular segment spans residues 300–334 (SCKMPKKYHMQIVGEIRQGFPTPVAPMVSQWKGMV). A helical transmembrane segment spans residues 335 to 358 (GTAFSLAIVGYVINLAMGRTLASK). Residues 359 to 365 (HGYDVDS) lie on the Cytoplasmic side of the membrane. The chain crosses the membrane as a helical span at residues 366 to 379 (NQEMIALGCSNFFG). At 380-390 (SFFKIHVICCA) the chain is on the extracellular side. The helical transmembrane segment at 391 to 400 (LSVTLAVDGA) threads the bilayer. The Cytoplasmic portion of the chain corresponds to 401–405 (GGKSQ). A helical membrane pass occupies residues 406–419 (VASLCVSLVVMITM). Over 420 to 431 (LVLGSYLYPLPK) the chain is Extracellular. Residues 432–457 (AVLGALIAVNLKNSLKQLTDPYYLWR) form a helical membrane-spanning segment. Residues 458-461 (KSKL) are Cytoplasmic-facing. Residues 462-476 (DCCVWVVSFLSSFFL) traverse the membrane as a helical segment. The Extracellular portion of the chain corresponds to 477–479 (SLP). A helical transmembrane segment spans residues 480-498 (YGVAVGVAFSILVVIFQTQ). Residues 499–790 (FRNGSTLAQV…MFHTETLTAL (292 aa)) lie on the Cytoplasmic side of the membrane. The 219-residue stretch at 519–737 (TYNRAQEIAG…PSIHDAVLFA (219 aa)) folds into the STAS domain.

The protein belongs to the SLC26A/SulP transporter (TC 2.A.53) family. Homodimer. Expressed in stomach and trachea. Abundantly expressed in the apical domain of the surface epithelial cells and the deep cells in the gastric gland. Also expressed in heart, brain, lung and liver.

It is found in the cell membrane. The protein resides in the endomembrane system. It carries out the reaction chloride(in) = chloride(out). The catalysed reaction is hydrogencarbonate(in) + chloride(out) = hydrogencarbonate(out) + chloride(in). With respect to regulation, inhibited by ammonium and thiosulfate. Its function is as follows. Ion transporter that can act both as an ion channel and anion exchanger. Mainly acts as a chloride channel, which mediate uncoupled chloride anion transport in an alternate-access mechanism where a saturable binding site is alternately exposed to either one or the other side of the membrane. Also acts as a DIDS- and thiosulfate- sensitive anion exchanger the exchange of chloride for bicarbonate ions across the cell membrane. The sequence is that of Solute carrier family 26 member 9 from Mus musculus (Mouse).